Here is a 42-residue protein sequence, read N- to C-terminus: Potassium channel toxin gamma-KTx 1.8 (42 aa).

4 cysteine pairs are disulfide-bonded: cysteine 5–cysteine 23, cysteine 11–cysteine 34, cysteine 20–cysteine 39, and cysteine 24–cysteine 41.

Belongs to the ergtoxin family. Gamma-KTx 1 subfamily. Expressed by the venom gland.

Its subcellular location is the secreted. Blocks in a reversible manner human and rat Kv11.1/KCNH2/ERG1 potassium channels. Also completely and irreversibly blocks rat Kv11.2/KCNH6/ERG2 and human Kv11.3/KCNH7/ERG3 channels. Also weakly inhibits Kir2.1/KCNJ2 and Kv1.2/KCNA2 potassium channels. This is Potassium channel toxin gamma-KTx 1.8 from Centruroides elegans (Bark scorpion).